A 385-amino-acid polypeptide reads, in one-letter code: 8-amino-7-oxononanoate synthase (385 aa).

Substrate is bound at residue Arg21. 108–109 (GF) lines the pyridoxal 5'-phosphate pocket. His133 provides a ligand contact to substrate. Pyridoxal 5'-phosphate contacts are provided by Ser179, His207, and Thr233. Lys236 is modified (N6-(pyridoxal phosphate)lysine). Thr352 provides a ligand contact to substrate.

The protein belongs to the class-II pyridoxal-phosphate-dependent aminotransferase family. BioF subfamily. Homodimer. Requires pyridoxal 5'-phosphate as cofactor.

The enzyme catalyses 6-carboxyhexanoyl-[ACP] + L-alanine + H(+) = (8S)-8-amino-7-oxononanoate + holo-[ACP] + CO2. Its pathway is cofactor biosynthesis; biotin biosynthesis. Functionally, catalyzes the decarboxylative condensation of pimeloyl-[acyl-carrier protein] and L-alanine to produce 8-amino-7-oxononanoate (AON), [acyl-carrier protein], and carbon dioxide. The chain is 8-amino-7-oxononanoate synthase from Salmonella choleraesuis (strain SC-B67).